A 151-amino-acid polypeptide reads, in one-letter code: Large ribosomal subunit protein bL9 (151 aa).

This sequence belongs to the bacterial ribosomal protein bL9 family.

Its function is as follows. Binds to the 23S rRNA. The protein is Large ribosomal subunit protein bL9 of Prochlorococcus marinus (strain MIT 9515).